A 315-amino-acid chain; its full sequence is Thioredoxin reductase (315 aa).

34 to 41 serves as a coordination point for FAD; sequence EGQKVGGQ. A disulfide bond links C134 and C137. 282–291 provides a ligand contact to FAD; the sequence is DIRVKSLRQV.

It belongs to the class-II pyridine nucleotide-disulfide oxidoreductase family. Homodimer. It depends on FAD as a cofactor.

Its subcellular location is the cytoplasm. It catalyses the reaction [thioredoxin]-dithiol + NADP(+) = [thioredoxin]-disulfide + NADPH + H(+). In Peptoclostridium acidaminophilum (Eubacterium acidaminophilum), this protein is Thioredoxin reductase (trxB).